A 498-amino-acid chain; its full sequence is Glycerol kinase (498 aa).

Thr-11 is an ADP binding site. The ATP site is built by Thr-11, Ser-12, and Ser-13. Thr-11 contacts sn-glycerol 3-phosphate. Position 15 (Arg-15) interacts with ADP. Sn-glycerol 3-phosphate contacts are provided by Arg-81, Glu-82, Tyr-133, and Asp-242. Arg-81, Glu-82, Tyr-133, Asp-242, and Gln-243 together coordinate glycerol. ADP is bound by residues Thr-264 and Gly-307. Residues Thr-264, Gly-307, Gln-311, and Gly-412 each contribute to the ATP site. Residues Gly-412 and Asn-416 each coordinate ADP.

It belongs to the FGGY kinase family.

It carries out the reaction glycerol + ATP = sn-glycerol 3-phosphate + ADP + H(+). It participates in polyol metabolism; glycerol degradation via glycerol kinase pathway; sn-glycerol 3-phosphate from glycerol: step 1/1. Its activity is regulated as follows. Inhibited by fructose 1,6-bisphosphate (FBP). Its function is as follows. Key enzyme in the regulation of glycerol uptake and metabolism. Catalyzes the phosphorylation of glycerol to yield sn-glycerol 3-phosphate. This Acidovorax ebreus (strain TPSY) (Diaphorobacter sp. (strain TPSY)) protein is Glycerol kinase.